The sequence spans 456 residues: UPF0210 protein Dde_3704 (456 aa).

This sequence belongs to the UPF0210 family. In terms of assembly, homodimer.

This Oleidesulfovibrio alaskensis (strain ATCC BAA-1058 / DSM 17464 / G20) (Desulfovibrio alaskensis) protein is UPF0210 protein Dde_3704.